We begin with the raw amino-acid sequence, 188 residues long: 3-hydroxyanthranilate 3,4-dioxygenase 2 (188 aa).

Position 46 (Arg-46) interacts with O2. Positions 50, 70, and 108 each coordinate Fe cation. A substrate-binding site is contributed by Glu-70. Positions 112 and 122 each coordinate substrate.

It belongs to the 3-HAO family. Fe(2+) serves as cofactor.

Its subcellular location is the cytoplasm. The enzyme catalyses 3-hydroxyanthranilate + O2 = (2Z,4Z)-2-amino-3-carboxymuconate 6-semialdehyde. The protein operates within cofactor biosynthesis; NAD(+) biosynthesis; quinolinate from L-kynurenine: step 3/3. In terms of biological role, catalyzes the oxidative ring opening of 3-hydroxyanthranilate to 2-amino-3-carboxymuconate semialdehyde, which spontaneously cyclizes to quinolinate. The chain is 3-hydroxyanthranilate 3,4-dioxygenase 2 (bna1-2) from Aspergillus fumigatus (strain CBS 144.89 / FGSC A1163 / CEA10) (Neosartorya fumigata).